The chain runs to 547 residues: Ribosome protection protein VmlR (547 aa).

Residues 5–200 form the ABC transporter 1 domain; sequence VTLTNVSYEV…FREKKRLTQQ (196 aa). ATP is bound at residue 37-44; it reads GKNGAGKS. Residues 183 to 289 are antibiotic resistance domain (ARD); it reads GNYSGYMKFR…SIDTTHKTGK (107 aa). Coiled coils occupy residues 193–222 and 245–269; these read EKKR…GLAS and AKRT…AKAE. Residues 292–504 enclose the ABC transporter 2 domain; the sequence is LEVQNVTKAF…REELRLKLET (213 aa). Residue 324 to 331 coordinates ATP; the sequence is GPNGSGKT. A C-terminal extension (CTE) region spans residues 483–547; the sequence is KQLNDVPSER…KELDHQDKKD (65 aa). Positions 488–543 form a coiled coil; it reads VPSERNEREELRLKLETERQEVLGKLSFMTPNDKGYKELDQAFNELTKRIKELDHQ.

The protein belongs to the ABC transporter superfamily. ABCF family. ARE2 subfamily. In terms of assembly, binds within the E-site of the 70S ribosome, where it contacts ribosomal proteins L1, L5, L33-1, S7, S11, the 16 and 23S rRNAs and the acceptor arm of the P-site tRNA.

The protein localises to the cytoplasm. Recognizes and binds in the vacant E-site of ribosomes stalled by some peptidyltransferase center (PTC)-targeting antibiotics. Makes contact with the PTC and both ribosomal subunits. Induces conformational changes in the P-site, which allows it to dislodge the antibiotic from its PTC binding site. Binds to ribosomes either directly following translation initation or subsequent to E tRNA release during elongation. Involved in resistance to a narrow spectrum of antibiotics (the streptogramin A antibiotic virginiamycin M, the lincosamide antibiotic lincomycin and the pleuromutilin antibiotic tiamulin). This chain is Ribosome protection protein VmlR, found in Bacillus subtilis (strain 168).